The sequence spans 633 residues: Probable extracellular metalloproteinase 5 (633 aa).

The first 20 residues, 1-20 (MHGLLLAAAGLLSLPLHVLA), serve as a signal peptide directing secretion. A propeptide spanning residues 21-244 (HPQPSTNLAG…VHNVVDYVSH (224 aa)) is cleaved from the precursor. A glycan (N-linked (GlcNAc...) asparagine) is linked at N285. A Zn(2+)-binding site is contributed by H428. E429 is an active-site residue. Residue H432 coordinates Zn(2+). N592 and N621 each carry an N-linked (GlcNAc...) asparagine glycan.

Belongs to the peptidase M36 family. Requires Zn(2+) as cofactor.

It localises to the secreted. Secreted metalloproteinase probably acting as a virulence factor. The polypeptide is Probable extracellular metalloproteinase 5 (MEP5) (Trichophyton verrucosum (strain HKI 0517)).